We begin with the raw amino-acid sequence, 1185 residues long: AT-rich interactive domain-containing protein 5B (1185 aa).

Disordered regions lie at residues 248–281 (PNLK…ESKA), 413–550 (KGEE…PDED), 713–742 (ISKK…PIAI), 883–932 (HQQE…EGKG), and 1033–1058 (HLPK…LHGL). Residues 252-261 (GRPRKKKPCP) show a composition bias toward basic residues. Positions 321-413 (RADEQAFLVA…LILPYERFIK (93 aa)) constitute an ARID domain. Basic and acidic residues predominate over residues 447 to 461 (IKNENQKSKKEKDNA). Residues 462–471 (QKPQDASEVS) show a composition bias toward polar residues. Over residues 473–487 (EQEKDQESADQKNFT) the composition is skewed to basic and acidic residues. Over residues 1034 to 1053 (LPKETSVKEKVPDAEGEGSK) the composition is skewed to basic and acidic residues.

This sequence belongs to the ARID5B family.

It is found in the nucleus. Its function is as follows. Transcription coactivator that binds to the 5'-AATA[CT]-3' core sequence and plays a key role in adipogenesis and liver development. Required for adipogenesis: regulates triglyceride metabolism in adipocytes by regulating expression of adipogenic genes. The chain is AT-rich interactive domain-containing protein 5B (ARID5B) from Gallus gallus (Chicken).